A 273-amino-acid polypeptide reads, in one-letter code: NADPH-dependent 7-cyano-7-deazaguanine reductase (273 aa).

A substrate-binding site is contributed by Val-80 to Ser-82. Ser-82–Lys-83 contributes to the NADPH binding site. Cys-180 acts as the Thioimide intermediate in catalysis. Asp-187 serves as the catalytic Proton donor. His-219–Glu-220 is a substrate binding site. Residue Arg-248 to Gly-249 coordinates NADPH.

It belongs to the GTP cyclohydrolase I family. QueF type 2 subfamily. In terms of assembly, homodimer.

The protein resides in the cytoplasm. The enzyme catalyses 7-aminomethyl-7-carbaguanine + 2 NADP(+) = 7-cyano-7-deazaguanine + 2 NADPH + 3 H(+). The protein operates within tRNA modification; tRNA-queuosine biosynthesis. In terms of biological role, catalyzes the NADPH-dependent reduction of 7-cyano-7-deazaguanine (preQ0) to 7-aminomethyl-7-deazaguanine (preQ1). This is NADPH-dependent 7-cyano-7-deazaguanine reductase from Bordetella parapertussis (strain 12822 / ATCC BAA-587 / NCTC 13253).